A 150-amino-acid chain; its full sequence is Putative HTH-type transcriptional regulator HI_0379 (150 aa).

Residues 2-131 form the HTH rrf2-type domain; that stretch reads KLTSKGRYAV…NEITLAELVN (130 aa).

The protein is Putative HTH-type transcriptional regulator HI_0379 of Haemophilus influenzae (strain ATCC 51907 / DSM 11121 / KW20 / Rd).